Here is a 927-residue protein sequence, read N- to C-terminus: Heat shock protein hsp98 (927 aa).

The Clp R domain maps to 2–162 (TSKMEFTDRA…TDAIQAIRGT (161 aa)). Repeat regions lie at residues 7 to 87 (FTDR…LVRL) and 99 to 162 (MAPS…IRGT). The NBD1 stretch occupies residues 179–428 (LAKFTIDMTA…AVRVARESQP (250 aa)). 224–231 (GEPGVGKT) serves as a coordination point for ATP. Positions 429–553 (EIIDSLERKL…AALNAAAAET (125 aa)) form a coiled coil. The disordered stretch occupies residues 454–473 (EASKARLEQAKKDAENVEEE). Residues 562 to 752 (VGPDQINEIV…IVVMTSNLGA (191 aa)) are NBD2. 635-642 (GPSGTGKT) serves as a coordination point for ATP. Residues 908–927 (EDAVDEVAPESEMDEDLYDD) are disordered.

This sequence belongs to the ClpA/ClpB family. In terms of assembly, homohexamer, forming a ring with a central pore.

It is found in the cytoplasm. Its subcellular location is the nucleus. In terms of biological role, required, in concert with Hsp40 and Hsp70 and small Hsps, for the dissociation, resolubilization and refolding of aggregates of damaged proteins after heat or other environmental stresses. Extracts proteins from aggregates by unfolding and threading them in an ATP-dependent process through the axial channel of the protein hexamer, after which they can be refolded by components of the Hsp70/Hsp40 chaperone system. The protein is Heat shock protein hsp98 (hsp98) of Neurospora crassa (strain ATCC 24698 / 74-OR23-1A / CBS 708.71 / DSM 1257 / FGSC 987).